We begin with the raw amino-acid sequence, 104 residues long: Urease subunit beta (104 aa).

It belongs to the urease beta subunit family. In terms of assembly, heterotrimer of UreA (gamma), UreB (beta) and UreC (alpha) subunits. Three heterotrimers associate to form the active enzyme.

Its subcellular location is the cytoplasm. The enzyme catalyses urea + 2 H2O + H(+) = hydrogencarbonate + 2 NH4(+). It participates in nitrogen metabolism; urea degradation; CO(2) and NH(3) from urea (urease route): step 1/1. The chain is Urease subunit beta from Synechococcus sp. (strain RCC307).